Consider the following 128-residue polypeptide: Ribonuclease P protein component (128 aa).

It belongs to the RnpA family. As to quaternary structure, consists of a catalytic RNA component (M1 or rnpB) and a protein subunit.

It catalyses the reaction Endonucleolytic cleavage of RNA, removing 5'-extranucleotides from tRNA precursor.. RNaseP catalyzes the removal of the 5'-leader sequence from pre-tRNA to produce the mature 5'-terminus. It can also cleave other RNA substrates such as 4.5S RNA. The protein component plays an auxiliary but essential role in vivo by binding to the 5'-leader sequence and broadening the substrate specificity of the ribozyme. The sequence is that of Ribonuclease P protein component from Prochlorococcus marinus (strain MIT 9303).